The following is a 277-amino-acid chain: Phosphatidylserine decarboxylase proenzyme (277 aa).

Catalysis depends on charge relay system; for autoendoproteolytic cleavage activity residues aspartate 88, histidine 144, and serine 242. Serine 242 (schiff-base intermediate with substrate; via pyruvic acid; for decarboxylase activity) is an active-site residue. A Pyruvic acid (Ser); by autocatalysis modification is found at serine 242.

The protein belongs to the phosphatidylserine decarboxylase family. PSD-B subfamily. Prokaryotic type I sub-subfamily. In terms of assembly, heterodimer of a large membrane-associated beta subunit and a small pyruvoyl-containing alpha subunit. It depends on pyruvate as a cofactor. In terms of processing, is synthesized initially as an inactive proenzyme. Formation of the active enzyme involves a self-maturation process in which the active site pyruvoyl group is generated from an internal serine residue via an autocatalytic post-translational modification. Two non-identical subunits are generated from the proenzyme in this reaction, and the pyruvate is formed at the N-terminus of the alpha chain, which is derived from the carboxyl end of the proenzyme. The autoendoproteolytic cleavage occurs by a canonical serine protease mechanism, in which the side chain hydroxyl group of the serine supplies its oxygen atom to form the C-terminus of the beta chain, while the remainder of the serine residue undergoes an oxidative deamination to produce ammonia and the pyruvoyl prosthetic group on the alpha chain. During this reaction, the Ser that is part of the protease active site of the proenzyme becomes the pyruvoyl prosthetic group, which constitutes an essential element of the active site of the mature decarboxylase.

It is found in the cell membrane. It catalyses the reaction a 1,2-diacyl-sn-glycero-3-phospho-L-serine + H(+) = a 1,2-diacyl-sn-glycero-3-phosphoethanolamine + CO2. It functions in the pathway phospholipid metabolism; phosphatidylethanolamine biosynthesis; phosphatidylethanolamine from CDP-diacylglycerol: step 2/2. Its function is as follows. Catalyzes the formation of phosphatidylethanolamine (PtdEtn) from phosphatidylserine (PtdSer). This is Phosphatidylserine decarboxylase proenzyme from Psychrobacter arcticus (strain DSM 17307 / VKM B-2377 / 273-4).